Consider the following 439-residue polypeptide: Innexin-19 (439 aa).

Helical transmembrane passes span 33 to 53, 103 to 123, 199 to 219, and 285 to 305; these read PLIL…GTPI, QWVP…CIFW, IVYS…FFIL, and VFAF…CSFI.

This sequence belongs to the pannexin family.

It is found in the cell membrane. The protein localises to the cell junction. Its subcellular location is the gap junction. In terms of biological role, structural component of the gap junctions that specifically coordinates left-right asymmetry in the developing nervous system. Acts by forming gap junction network linking embryonic neurons and providing electrical coupling between cells, leading to promote or inhibit AWC signaling. This is Innexin-19 (inx-19) from Caenorhabditis briggsae.